A 200-amino-acid chain; its full sequence is NADH-quinone oxidoreductase subunit C (200 aa).

It belongs to the complex I 30 kDa subunit family. As to quaternary structure, NDH-1 is composed of 14 different subunits. Subunits NuoB, C, D, E, F, and G constitute the peripheral sector of the complex.

It localises to the cell inner membrane. The enzyme catalyses a quinone + NADH + 5 H(+)(in) = a quinol + NAD(+) + 4 H(+)(out). NDH-1 shuttles electrons from NADH, via FMN and iron-sulfur (Fe-S) centers, to quinones in the respiratory chain. The immediate electron acceptor for the enzyme in this species is believed to be ubiquinone. Couples the redox reaction to proton translocation (for every two electrons transferred, four hydrogen ions are translocated across the cytoplasmic membrane), and thus conserves the redox energy in a proton gradient. This chain is NADH-quinone oxidoreductase subunit C, found in Burkholderia ambifaria (strain ATCC BAA-244 / DSM 16087 / CCUG 44356 / LMG 19182 / AMMD) (Burkholderia cepacia (strain AMMD)).